Here is a 247-residue protein sequence, read N- to C-terminus: UPF0259 membrane protein BUAP5A_271 (247 aa).

A run of 6 helical transmembrane segments spans residues 20–40, 85–105, 114–134, 137–157, 188–208, and 218–238; these read IGAIFFISIFATFMNILIDMF, IMESLISKTTLLGSIIILISV, IVSSIRTFFLFFPSLFILNFL, FIIQIGFMLLIIPGILLSIIL, IIGPGVLFWMCGKFILTMLLA, and LFLISNISMNILFSILIIYLF.

This sequence belongs to the UPF0259 family.

Its subcellular location is the cell membrane. This chain is UPF0259 membrane protein BUAP5A_271, found in Buchnera aphidicola subsp. Acyrthosiphon pisum (strain 5A).